The sequence spans 456 residues: tRNA modification GTPase MnmE (456 aa).

Residues Lys-29, Glu-87, and Arg-126 each contribute to the (6S)-5-formyl-5,6,7,8-tetrahydrofolate site. Residues 222–380 enclose the TrmE-type G domain; the sequence is GYKLAIIGRP…LLSLLASWLD (159 aa). Asn-232 serves as a coordination point for K(+). GTP is bound by residues 232–237, 251–257, and 276–279; these read NVGKSS, SDIPGTT, and DTAG. Ser-236 contacts Mg(2+). Residues Ser-251, Ile-253, and Thr-256 each contribute to the K(+) site. A Mg(2+)-binding site is contributed by Thr-257. Lys-456 is a (6S)-5-formyl-5,6,7,8-tetrahydrofolate binding site.

The protein belongs to the TRAFAC class TrmE-Era-EngA-EngB-Septin-like GTPase superfamily. TrmE GTPase family. Homodimer. Heterotetramer of two MnmE and two MnmG subunits. The cofactor is K(+).

The protein resides in the cytoplasm. Functionally, exhibits a very high intrinsic GTPase hydrolysis rate. Involved in the addition of a carboxymethylaminomethyl (cmnm) group at the wobble position (U34) of certain tRNAs, forming tRNA-cmnm(5)s(2)U34. This is tRNA modification GTPase MnmE from Wolinella succinogenes (strain ATCC 29543 / DSM 1740 / CCUG 13145 / JCM 31913 / LMG 7466 / NCTC 11488 / FDC 602W) (Vibrio succinogenes).